The primary structure comprises 473 residues: H(+)/Cl(-) exchange transporter ClcA (473 aa).

The Cytoplasmic portion of the chain corresponds to 1–32 (MKTDTPSLEIPQAARLRRRQLIRQLLERDKTP). A helical membrane pass occupies residues 33 to 69 (LAILFMAAVVGTLVGLAAVAFDKGVSWLQNQRMGALV). Residues 70–76 (HTADNYP) are Periplasmic-facing. Residues 77–100 (LLLTVAFLCSAVLAMFGYFLVRKY) form a helical membrane-spanning segment. Residues 106–110 (GSGIP) carry the Selectivity filter part_1 motif. Residue serine 107 participates in chloride binding. The helical intramembrane region spans 109–116 (IPEIEGAL). Residues 117–123 (EDQRPVR) are Cytoplasmic-facing. Transmembrane regions (helical) follow at residues 124–141 (WWRVLPVKFFGGLGTLGG) and 148–166 (EGPTVQIGGNIGRMVLDIF). Positions 146–150 (GREGP) match the Selectivity filter part_2 motif. Over 167–176 (RLKGDEARHT) the chain is Cytoplasmic. 2 intramembrane regions (helical) span residues 177-189 (LLATGAAAGLAAA) and 193-201 (PLAGILFII). The Cytoplasmic segment spans residues 202-214 (EEMRPQFRYTLIS). The helical transmembrane segment at 215–232 (IKAVFIGVIMSTIMYRIF) threads the bilayer. Residues 233–252 (NHEVALIDVGKLSDAPLNTL) lie on the Periplasmic side of the membrane. Residues 253 to 281 (WLYLILGIIFGIFGPIFNKWVLGMQDLLH) traverse the membrane as a helical segment. Topologically, residues 282–287 (RVHGGN) are cytoplasmic. Residues 288–309 (ITKWVIMGGAIGGLCGLLGFVA) traverse the membrane as a helical segment. Topologically, residues 310–329 (PATSGGGFNLIPIATAGNFS) are periplasmic. The next 2 helical transmembrane spans lie at 330–349 (MGMLVFIFVARVITTLLCFS) and 355–376 (GIFAPMLALGTVLGTAFGMVAV). The short motif at 355–359 (GIFAP) is the Selectivity filter part_3 element. Residues isoleucine 356 and phenylalanine 357 each contribute to the chloride site. Residues 377 to 386 (ELFPQYHLEA) are Periplasmic-facing. The segment at residues 387–401 (GTFAIAGMGALLAAS) is an intramembrane region (helical). The segment at residues 402–404 (IRA) is an intramembrane region (note=Loop between two helices). Residues 405-416 (PLTGIILVLEMT) constitute an intramembrane region (helical). The segment at residues 417–421 (DNYQL) is an intramembrane region (note=Loop between two helices). Residues 422–438 (ILPMIITGLGATLLAQF) traverse the membrane as a helical segment. Residues 439–473 (TGGKPLYSAILARTLAKQEAEQLARSKAASASENT) are Cytoplasmic-facing. A chloride-binding site is contributed by tyrosine 445.

It belongs to the chloride channel (TC 2.A.49) family. ClcA subfamily. In terms of assembly, homodimer.

The protein localises to the cell inner membrane. It carries out the reaction 2 chloride(in) + H(+)(out) = 2 chloride(out) + H(+)(in). In terms of biological role, proton-coupled chloride transporter. Functions as antiport system and exchanges two chloride ions for 1 proton. Probably acts as an electrical shunt for an outwardly-directed proton pump that is linked to amino acid decarboxylation, as part of the extreme acid resistance (XAR) response. This Escherichia fergusonii (strain ATCC 35469 / DSM 13698 / CCUG 18766 / IAM 14443 / JCM 21226 / LMG 7866 / NBRC 102419 / NCTC 12128 / CDC 0568-73) protein is H(+)/Cl(-) exchange transporter ClcA.